A 242-amino-acid polypeptide reads, in one-letter code: UPF0273 protein MJ1359 (242 aa).

Residues lysine 2–arginine 242 form the KaiC domain. Glycine 29 to serine 36 is an ATP binding site.

This sequence belongs to the UPF0273 family.

In Methanocaldococcus jannaschii (strain ATCC 43067 / DSM 2661 / JAL-1 / JCM 10045 / NBRC 100440) (Methanococcus jannaschii), this protein is UPF0273 protein MJ1359.